Here is a 222-residue protein sequence, read N- to C-terminus: Nucleoside triphosphate pyrophosphatase (222 aa).

Residue D82 is the Proton acceptor of the active site.

The protein belongs to the Maf family. The cofactor is a divalent metal cation.

The protein resides in the cytoplasm. The enzyme catalyses a ribonucleoside 5'-triphosphate + H2O = a ribonucleoside 5'-phosphate + diphosphate + H(+). It carries out the reaction a 2'-deoxyribonucleoside 5'-triphosphate + H2O = a 2'-deoxyribonucleoside 5'-phosphate + diphosphate + H(+). Functionally, nucleoside triphosphate pyrophosphatase. May have a dual role in cell division arrest and in preventing the incorporation of modified nucleotides into cellular nucleic acids. The polypeptide is Nucleoside triphosphate pyrophosphatase (Mycobacterium tuberculosis (strain ATCC 25177 / H37Ra)).